The chain runs to 223 residues: NLP effector protein 3 (223 aa).

The Conserved undecapeptide motif motif lies at 90-100 (AIMYVWYFPKD). Residues 107-113 (GHRHDWE) carry the Conserved heptapeptide motif motif.

The protein belongs to the Necrosis inducing protein (NPP1) family.

Its subcellular location is the secreted. It localises to the host cytoplasm. Probable secreted effector that may act as a pathogen-associated molecular pattern (PAMP) recognized by the plant immune system. Seems not to induce necrosis, neither in several susceptible or resistant Vitis species nor in the dicot model plant Nicotiana benthamiana. This chain is NLP effector protein 3, found in Plasmopara viticola (Downy mildew of grapevine).